A 324-amino-acid chain; its full sequence is Holliday junction branch migration complex subunit RuvB (324 aa).

The large ATPase domain (RuvB-L) stretch occupies residues 1–180; that stretch reads MKSISCGKEY…FGIPLHLEFY (180 aa). Residues Ile19, Arg20, Gly61, Lys64, Thr65, Thr66, 127–129, Arg170, Tyr180, and Arg217 each bind ATP; that span reads EDF. Residue Thr65 participates in Mg(2+) binding. Residues 181 to 251 are small ATPAse domain (RuvB-S); sequence SFEELVNIIK…VADSVLLKLG (71 aa). Positions 254-324 are head domain (RuvB-H); sequence KMGLNKLDMN…TDQAKEYLSL (71 aa). Positions 307 and 312 each coordinate DNA.

It belongs to the RuvB family. Homohexamer. Forms an RuvA(8)-RuvB(12)-Holliday junction (HJ) complex. HJ DNA is sandwiched between 2 RuvA tetramers; dsDNA enters through RuvA and exits via RuvB. An RuvB hexamer assembles on each DNA strand where it exits the tetramer. Each RuvB hexamer is contacted by two RuvA subunits (via domain III) on 2 adjacent RuvB subunits; this complex drives branch migration. In the full resolvosome a probable DNA-RuvA(4)-RuvB(12)-RuvC(2) complex forms which resolves the HJ.

The protein resides in the cytoplasm. The enzyme catalyses ATP + H2O = ADP + phosphate + H(+). In terms of biological role, the RuvA-RuvB-RuvC complex processes Holliday junction (HJ) DNA during genetic recombination and DNA repair, while the RuvA-RuvB complex plays an important role in the rescue of blocked DNA replication forks via replication fork reversal (RFR). RuvA specifically binds to HJ cruciform DNA, conferring on it an open structure. The RuvB hexamer acts as an ATP-dependent pump, pulling dsDNA into and through the RuvAB complex. RuvB forms 2 homohexamers on either side of HJ DNA bound by 1 or 2 RuvA tetramers; 4 subunits per hexamer contact DNA at a time. Coordinated motions by a converter formed by DNA-disengaged RuvB subunits stimulates ATP hydrolysis and nucleotide exchange. Immobilization of the converter enables RuvB to convert the ATP-contained energy into a lever motion, pulling 2 nucleotides of DNA out of the RuvA tetramer per ATP hydrolyzed, thus driving DNA branch migration. The RuvB motors rotate together with the DNA substrate, which together with the progressing nucleotide cycle form the mechanistic basis for DNA recombination by continuous HJ branch migration. Branch migration allows RuvC to scan DNA until it finds its consensus sequence, where it cleaves and resolves cruciform DNA. The sequence is that of Holliday junction branch migration complex subunit RuvB from Wolbachia sp. subsp. Drosophila simulans (strain wRi).